Consider the following 419-residue polypeptide: Akuammiline synthase 1 (419 aa).

The active-site Proton acceptor is H151. The Nuclear localization signal signature appears at 206–213 (TRRFVFPA). The Proton acceptor role is filled by D359.

It belongs to the plant acyltransferase family. Monomer.

The protein localises to the cytoplasm. It localises to the nucleus. It carries out the reaction rhazimol + acetyl-CoA = akuammiline + CoA + H(+). It participates in alkaloid biosynthesis. Acyltransferase involved in the biosynthesis of akuammilan monoterpene indole alkaloids (MIAs) natural products, components with various biological properties such as antidiabetic, antibacterial, anti-inflammatory, anticancer, and antimalarial activities. Catalyzes the conversion of rhazimol to akuammiline. In Alstonia scholaris (Dogbane), this protein is Akuammiline synthase 1.